We begin with the raw amino-acid sequence, 124 residues long: Translation initiation factor 5A (124 aa).

The interval 27–53 is disordered; it reads TSYSTSKPGKHGSAKARVEGTGVFDGQ. Lysine 36 bears the Hypusine mark.

Belongs to the eIF-5A family.

The protein resides in the cytoplasm. Functionally, functions by promoting the formation of the first peptide bond. In Natronomonas pharaonis (strain ATCC 35678 / DSM 2160 / CIP 103997 / JCM 8858 / NBRC 14720 / NCIMB 2260 / Gabara) (Halobacterium pharaonis), this protein is Translation initiation factor 5A.